A 357-amino-acid polypeptide reads, in one-letter code: DNA replication and repair protein RecF (357 aa).

Position 30–37 (30–37 (GANGSGKT)) interacts with ATP.

It belongs to the RecF family.

The protein localises to the cytoplasm. In terms of biological role, the RecF protein is involved in DNA metabolism; it is required for DNA replication and normal SOS inducibility. RecF binds preferentially to single-stranded, linear DNA. It also seems to bind ATP. This chain is DNA replication and repair protein RecF, found in Salmonella paratyphi A (strain ATCC 9150 / SARB42).